The chain runs to 126 residues: Protein LiaI (126 aa).

The next 2 helical transmembrane spans lie at 11–31 (FLLI…GFII) and 56–76 (IIVG…VVGI).

The protein localises to the cell membrane. The protein is Protein LiaI (liaI) of Bacillus subtilis (strain 168).